The chain runs to 282 residues: PAK4-inhibitor INKA1 (282 aa).

Disordered stretches follow at residues 21-50 (RDTG…QFRA) and 92-127 (GFSE…FSVS). Inka box regions lie at residues 163-200 (EAED…ELPE) and 256-282 (PADI…VSYL).

This sequence belongs to the INKA family. In terms of assembly, interacts with PAK4. Expressed in tissues of the developing head during neurulation.

The protein localises to the nucleus. It localises to the cytoplasm. Inhibitor of the serine/threonine-protein kinase PAK4. Acts by binding PAK4 in a substrate-like manner, inhibiting the protein kinase activity. This chain is PAK4-inhibitor INKA1, found in Mus musculus (Mouse).